The following is a 366-amino-acid chain: Alanine racemase (366 aa).

Residue Lys33 is the Proton acceptor; specific for D-alanine of the active site. Lys33 is subject to N6-(pyridoxal phosphate)lysine. Arg129 serves as a coordination point for substrate. Tyr253 serves as the catalytic Proton acceptor; specific for L-alanine. A substrate-binding site is contributed by Met301.

Belongs to the alanine racemase family. Pyridoxal 5'-phosphate is required as a cofactor.

It catalyses the reaction L-alanine = D-alanine. The protein operates within amino-acid biosynthesis; D-alanine biosynthesis; D-alanine from L-alanine: step 1/1. Its function is as follows. Catalyzes the interconversion of L-alanine and D-alanine. May also act on other amino acids. In Xanthomonas axonopodis pv. citri (strain 306), this protein is Alanine racemase (alr).